Reading from the N-terminus, the 167-residue chain is Urease accessory protein UreE (167 aa).

Positions 137–167 (ARGAYHAHGGHSHGHDHGHSHGHDHHDHSHD) are disordered. Residues 149–167 (HGHDHGHSHGHDHHDHSHD) are compositionally biased toward basic and acidic residues.

Belongs to the UreE family.

The protein localises to the cytoplasm. Functionally, involved in urease metallocenter assembly. Binds nickel. Probably functions as a nickel donor during metallocenter assembly. The protein is Urease accessory protein UreE of Rhizobium rhizogenes (strain K84 / ATCC BAA-868) (Agrobacterium radiobacter).